The sequence spans 205 residues: Protein TK0174 (205 aa).

The region spanning 7–201 (EWGEFLVRLA…EEYPRGPVRR (195 aa)) is the AMMECR1 domain.

This chain is Protein TK0174, found in Thermococcus kodakarensis (strain ATCC BAA-918 / JCM 12380 / KOD1) (Pyrococcus kodakaraensis (strain KOD1)).